Reading from the N-terminus, the 326-residue chain is MALTADVKDELTKVEVSKTTVRAAELATILRFSGGLHLIGGRIAVESELDTPELARRVRKDLAELYGVRGVVSVISTSGVRRASQYLVRVLDGGETLARQTGLLDAHRRPIRGLPNRLTTGSREELAAVWRGAFLASGSLTDPGRSAALEVTCPGNEAAMALVGAAGRIGVAAKAREVRGVHRVVIRDGEAISAMLVQMGAAQTVSNWEELRQRREVRATANRLVNFDDANLRRSAQAAVAACARVERALEILGDDIPEHLQYAGRLRLAHRDASLDELGHYADPPMTKDAVAGRIRRLLAMADKRASDLGVPSTEASLPADFDEV.

Residues 275-308 constitute a DNA-binding region (H-T-H motif); sequence SLDELGHYADPPMTKDAVAGRIRRLLAMADKRAS.

This sequence belongs to the WhiA family.

Functionally, involved in cell division and chromosome segregation. The polypeptide is Probable cell division protein WhiA (Leifsonia xyli subsp. xyli (strain CTCB07)).